The following is a 467-amino-acid chain: Argininosuccinate lyase (467 aa).

This sequence belongs to the lyase 1 family. Argininosuccinate lyase subfamily.

It localises to the cytoplasm. It catalyses the reaction 2-(N(omega)-L-arginino)succinate = fumarate + L-arginine. The protein operates within amino-acid biosynthesis; L-arginine biosynthesis; L-arginine from L-ornithine and carbamoyl phosphate: step 3/3. This is Argininosuccinate lyase from Allorhizobium ampelinum (strain ATCC BAA-846 / DSM 112012 / S4) (Agrobacterium vitis (strain S4)).